We begin with the raw amino-acid sequence, 244 residues long: Cell division protein DivIB (244 aa).

Topologically, residues 1–6 (MKIKWP) are cytoplasmic. Residues 7–27 (LQLWISLAVFVTIAVGTLLLL) traverse the membrane as a helical segment. The 77-residue stretch at 28 to 104 (QPWQTIKTVT…IDIAEKVTAG (77 aa)) folds into the POTRA domain. The Extracellular portion of the chain corresponds to 28-244 (QPWQTIKTVT…KADNKAHQKQ (217 aa)).

It belongs to the FtsQ/DivIB family. DivIB subfamily.

The protein localises to the cell membrane. In terms of biological role, cell division protein that may be involved in stabilizing or promoting the assembly of the division complex. This Leuconostoc kimchii (strain IMSNU 11154 / KCTC 2386 / IH25) protein is Cell division protein DivIB.